A 396-amino-acid chain; its full sequence is Initiation-specific alpha-1,6-mannosyltransferase (396 aa).

The Cytoplasmic segment spans residues 1–7; that stretch reads MLRLRLR. Residues 8 to 28 form a helical; Signal-anchor for type II membrane protein membrane-spanning segment; it reads SIVIGAAIAGSILLLFNHGSI. Over 29 to 396 the chain is Lumenal; sequence EGMEDLTEIS…HFFAGSWKDD (368 aa). The DXD motif motif lies at 229–231; it reads DID. Asparagine 345 is a glycosylation site (N-linked (GlcNAc...) asparagine).

It belongs to the glycosyltransferase 32 family. Mn(2+) serves as cofactor.

The protein resides in the endoplasmic reticulum membrane. It localises to the golgi apparatus membrane. It catalyses the reaction Transfers an alpha-D-mannosyl residue from GDP-mannose into lipid-linked oligosaccharide, forming an alpha-(1-&gt;6)-D-mannosyl-D-mannose linkage.. Mannosyltransferase involved in outer chain elongation of asparagine-linked oligosaccharides of the type Man(9)GlcNAc(2). May otherwise add the first alpha-1,6-mannose to the Man(8)GlcNAc(2) core oligosaccharide from the ER. Represents the first enzymatic event required for synthesis of outer chain mannose linkages on yeast secretory proteins. This chain is Initiation-specific alpha-1,6-mannosyltransferase, found in Schizosaccharomyces pombe (strain 972 / ATCC 24843) (Fission yeast).